The sequence spans 396 residues: Enoyl-[acyl-carrier-protein] reductase [NADH] (396 aa).

Residues 48 to 53, 74 to 75, 111 to 112, and 139 to 140 each bind NAD(+); these read GASTGY, FE, DA, and LA. Position 225 (tyrosine 225) interacts with substrate. Catalysis depends on tyrosine 235, which acts as the Proton donor. NAD(+) is bound by residues lysine 244 and 273–275; that span reads VVT.

Belongs to the TER reductase family. Monomer.

The enzyme catalyses a 2,3-saturated acyl-[ACP] + NAD(+) = a (2E)-enoyl-[ACP] + NADH + H(+). It participates in lipid metabolism; fatty acid biosynthesis. Functionally, involved in the final reduction of the elongation cycle of fatty acid synthesis (FAS II). Catalyzes the reduction of a carbon-carbon double bond in an enoyl moiety that is covalently linked to an acyl carrier protein (ACP). The chain is Enoyl-[acyl-carrier-protein] reductase [NADH] from Colwellia psychrerythraea (strain 34H / ATCC BAA-681) (Vibrio psychroerythus).